Here is a 283-residue protein sequence, read N- to C-terminus: Elongation factor Ts (283 aa).

The interval 84-87 (TDFV) is involved in Mg(2+) ion dislocation from EF-Tu.

It belongs to the EF-Ts family.

The protein resides in the cytoplasm. Its function is as follows. Associates with the EF-Tu.GDP complex and induces the exchange of GDP to GTP. It remains bound to the aminoacyl-tRNA.EF-Tu.GTP complex up to the GTP hydrolysis stage on the ribosome. This Bifidobacterium longum (strain DJO10A) protein is Elongation factor Ts.